The primary structure comprises 373 residues: 4-hydroxy-3-methylbut-2-en-1-yl diphosphate synthase (flavodoxin) (373 aa).

4 residues coordinate [4Fe-4S] cluster: C270, C273, C305, and E312.

It belongs to the IspG family. [4Fe-4S] cluster is required as a cofactor.

It carries out the reaction (2E)-4-hydroxy-3-methylbut-2-enyl diphosphate + oxidized [flavodoxin] + H2O + 2 H(+) = 2-C-methyl-D-erythritol 2,4-cyclic diphosphate + reduced [flavodoxin]. It functions in the pathway isoprenoid biosynthesis; isopentenyl diphosphate biosynthesis via DXP pathway; isopentenyl diphosphate from 1-deoxy-D-xylulose 5-phosphate: step 5/6. In terms of biological role, converts 2C-methyl-D-erythritol 2,4-cyclodiphosphate (ME-2,4cPP) into 1-hydroxy-2-methyl-2-(E)-butenyl 4-diphosphate. This Serratia proteamaculans (strain 568) protein is 4-hydroxy-3-methylbut-2-en-1-yl diphosphate synthase (flavodoxin).